A 128-amino-acid chain; its full sequence is Holo-[acyl-carrier-protein] synthase (128 aa).

2 residues coordinate Mg(2+): aspartate 8 and glutamate 60.

It belongs to the P-Pant transferase superfamily. AcpS family. It depends on Mg(2+) as a cofactor.

It is found in the cytoplasm. It carries out the reaction apo-[ACP] + CoA = holo-[ACP] + adenosine 3',5'-bisphosphate + H(+). Its function is as follows. Transfers the 4'-phosphopantetheine moiety from coenzyme A to a Ser of acyl-carrier-protein. The chain is Holo-[acyl-carrier-protein] synthase from Anaeromyxobacter dehalogenans (strain 2CP-1 / ATCC BAA-258).